The sequence spans 267 residues: Orotidine 5'-phosphate decarboxylase (267 aa).

The residue at position 2 (Ser-2) is an N-acetylserine. Substrate-binding positions include Asp-37, 59–61 (KTH), and 91–100 (DRKFADIGNT). Lys-93 functions as the Proton donor in the catalytic mechanism. Residues Lys-93 and Lys-209 each participate in a glycyl lysine isopeptide (Lys-Gly) (interchain with G-Cter in ubiquitin) cross-link. Substrate-binding residues include Tyr-217 and Arg-235. Lys-253 is covalently cross-linked (Glycyl lysine isopeptide (Lys-Gly) (interchain with G-Cter in ubiquitin)).

Belongs to the OMP decarboxylase family.

The enzyme catalyses orotidine 5'-phosphate + H(+) = UMP + CO2. Its pathway is pyrimidine metabolism; UMP biosynthesis via de novo pathway; UMP from orotate: step 2/2. The polypeptide is Orotidine 5'-phosphate decarboxylase (URA3) (Saccharomyces cerevisiae (strain ATCC 204508 / S288c) (Baker's yeast)).